The primary structure comprises 147 residues: Large ribosomal subunit protein uL13 (147 aa).

This sequence belongs to the universal ribosomal protein uL13 family. As to quaternary structure, part of the 50S ribosomal subunit.

In terms of biological role, this protein is one of the early assembly proteins of the 50S ribosomal subunit, although it is not seen to bind rRNA by itself. It is important during the early stages of 50S assembly. This is Large ribosomal subunit protein uL13 from Mycobacteroides abscessus (strain ATCC 19977 / DSM 44196 / CCUG 20993 / CIP 104536 / JCM 13569 / NCTC 13031 / TMC 1543 / L948) (Mycobacterium abscessus).